The primary structure comprises 263 residues: Endonuclease 8 (263 aa).

Pro-2 functions as the Schiff-base intermediate with DNA in the catalytic mechanism. Glu-3 acts as the Proton donor in catalysis. The active-site Proton donor; for beta-elimination activity is Lys-53. 3 residues coordinate DNA: Gln-70, Arg-125, and Asn-169. The segment at 229 to 263 (KVFHRDGEACERCGGIIEKTTLSSRPFYWCAHCQK) adopts an FPG-type zinc-finger fold. Arg-253 serves as the catalytic Proton donor; for delta-elimination activity.

The protein belongs to the FPG family. Requires Zn(2+) as cofactor.

The enzyme catalyses 2'-deoxyribonucleotide-(2'-deoxyribose 5'-phosphate)-2'-deoxyribonucleotide-DNA = a 3'-end 2'-deoxyribonucleotide-(2,3-dehydro-2,3-deoxyribose 5'-phosphate)-DNA + a 5'-end 5'-phospho-2'-deoxyribonucleoside-DNA + H(+). In terms of biological role, involved in base excision repair of DNA damaged by oxidation or by mutagenic agents. Acts as a DNA glycosylase that recognizes and removes damaged bases. Has a preference for oxidized pyrimidines, such as thymine glycol, 5,6-dihydrouracil and 5,6-dihydrothymine. Has AP (apurinic/apyrimidinic) lyase activity and introduces nicks in the DNA strand. Cleaves the DNA backbone by beta-delta elimination to generate a single-strand break at the site of the removed base with both 3'- and 5'-phosphates. This chain is Endonuclease 8, found in Salmonella typhi.